The chain runs to 399 residues: Methylthioribose kinase (399 aa).

Residues asparagine 40, lysine 57, and 111-113 (EDL) contribute to the ATP site. Substrate is bound at residue aspartate 229. ATP is bound at residue 246-248 (DAE). Arginine 344 lines the substrate pocket.

It belongs to the methylthioribose kinase family. Homodimer.

The catalysed reaction is 5-(methylsulfanyl)-D-ribose + ATP = 5-(methylsulfanyl)-alpha-D-ribose 1-phosphate + ADP + H(+). Its pathway is amino-acid biosynthesis; L-methionine biosynthesis via salvage pathway; S-methyl-5-thio-alpha-D-ribose 1-phosphate from S-methyl-5'-thioadenosine (hydrolase route): step 2/2. Catalyzes the phosphorylation of methylthioribose into methylthioribose-1-phosphate. The chain is Methylthioribose kinase from Cronobacter sakazakii (strain ATCC BAA-894) (Enterobacter sakazakii).